We begin with the raw amino-acid sequence, 1032 residues long: Kinesin heavy chain isoform 5A (1032 aa).

The residue at position 2 (Ala2) is an N-acetylalanine. Residues 9–327 enclose the Kinesin motor domain; sequence SIKVLCRFRP…LMFGQRAKTI (319 aa). 86–93 contributes to the ATP binding site; the sequence is GQTSSGKT. Residues 174–315 are microtubule-binding; it reads VSSPEEILDV…PSSYNDAETK (142 aa). The tract at residues 271–361 is necessary for interaction with ZFYVE27; it reads EGTKSYVPYR…KTKAQKETIA (91 aa). A coiled-coil region spans residues 331 to 906; the sequence is ASVNLELTAE…VDRIKEAVRY (576 aa). The tract at residues 353–1032 is interaction with BICD2; that stretch reads TKAQKETIAK…FPLHQETAAS (680 aa). Thr397 carries the post-translational modification Phosphothreonine. Disordered regions lie at residues 906 to 939 and 978 to 1010; these read YKSSGKRGHSAQIAKPVRPGHYPASSPTNPYGTR and SGATSSGGPLASYQKANMDNGNATDINDNRSDL. The interval 907–1032 is globular; the sequence is KSSGKRGHSA…FPLHQETAAS (126 aa). Low complexity predominate over residues 978 to 989; it reads SGATSSGGPLAS. The segment covering 991 to 1003 has biased composition (polar residues); it reads QKANMDNGNATDI.

The protein belongs to the TRAFAC class myosin-kinesin ATPase superfamily. Kinesin family. Kinesin subfamily. As to quaternary structure, oligomer composed of two heavy chains and two light chains. Interacts with GRIP1. Interacts with FMR1 (via C-terminus); this interaction is increased in a mGluR-dependent manner. Interacts with ZFYVE27. Interacts with VAPA, VAPB, SURF4, RAB11A (GDP-bound form), RAB11B (GDP-bound form) and RTN3 in a ZFYVE27-dependent manner. Interacts with BORCS5. Interacts with BICD2. Interacts with DTNB. In terms of tissue distribution, distributed throughout the CNS but is highly enriched in subsets of neurons.

It is found in the cytoplasm. It localises to the perinuclear region. The protein localises to the cytoskeleton. Its subcellular location is the perikaryon. The catalysed reaction is ATP + H2O + a kinesin associated with a microtubule at position (n) = ADP + phosphate a kinesin associated with a microtubule at position (n+1, toward the plus end).. Functionally, microtubule-dependent motor required for slow axonal transport of neurofilament proteins (NFH, NFM and NFL). Can induce formation of neurite-like membrane protrusions in non-neuronal cells in a ZFYVE27-dependent manner. The ZFYVE27-KIF5A complex contributes to the vesicular transport of VAPA, VAPB, SURF4, RAB11A, RAB11B and RTN3 proteins in neurons. Required for anterograde axonal transportation of MAPK8IP3/JIP3 which is essential for MAPK8IP3/JIP3 function in axon elongation. The chain is Kinesin heavy chain isoform 5A from Homo sapiens (Human).